The chain runs to 100 residues: Urease subunit gamma (100 aa).

This sequence belongs to the urease gamma subunit family. In terms of assembly, heterotrimer of UreA (gamma), UreB (beta) and UreC (alpha) subunits. Three heterotrimers associate to form the active enzyme.

The protein localises to the cytoplasm. It catalyses the reaction urea + 2 H2O + H(+) = hydrogencarbonate + 2 NH4(+). It functions in the pathway nitrogen metabolism; urea degradation; CO(2) and NH(3) from urea (urease route): step 1/1. This is Urease subunit gamma from Clostridium perfringens.